A 447-amino-acid chain; its full sequence is Crotonyl-CoA reductase (447 aa).

This sequence belongs to the zinc-containing alcohol dehydrogenase family. Crotonyl-CoA carboxylase/reductase subfamily. As to quaternary structure, homodimer.

It carries out the reaction butanoyl-CoA + NADP(+) = (2E)-butenoyl-CoA + NADPH + H(+). Inhibited by divalent cations (30-100%), beta-chloromercuribenzoate (85%), iodoacetamide (40%) and N-ethylmaleamide (80%). The presence of CoA thioesters containing 12-20 carbon atoms results in inhibition of enzyme activity. The greatest degree of inhibition is observed in the presence of palmitoyl-CoA and myristoyl-CoA. The branched-chain fatty acids, isopalmitoyl-CoA and isomyristoyl-CoA are less effective inhibitors of the crotonyl-CoA reductase. Concentrations of NADPH above 200 uM lead to inhibition of enzyme activity. May play a role in supplying butyryl-CoA for straight-chain fatty acid biosynthesis. Catalyzes the conversion of crotonyl-CoA to butyryl-CoA. It shows a high substrate specificity for crotonyl-CoA, a short-chain-length (C4), but no measurable activity is observed with shorter (C3) or longer-chain-length enoyl-CoA thioesters. This is Crotonyl-CoA reductase (ccr) from Streptomyces collinus.